Consider the following 412-residue polypeptide: MIMHLGLMMVVGLTLCLMHGQALLQVPEHPFSVVWNVPSARCKAHFGVHLPLDALGIVANHGQHFHGQNISIFYKNQFGLYPYFGPRGTAHNGGIPQAVSLDHHLARAAHQILHSLGSSFAGLAVLDWEEWYPLWAGNWGPHRQVYLAASWVWTQQMFPGLDPQEQLHKAHTSFEQAARALMEYTLQLGRTLRPSGLWGFYRYPACGNGWHKMASNYTGHCHAAITTRNTQLRWLWAASSALFPSIYLPPRLPLAYRQAFVRHRLEEAFRVALLEHSHPLPVLAYSRLTHRSSGRFLSLDDLMQTIGVSAALGTAGVVLWGDLSFSSSEEKCWRLHDYLVGTLGPYVINVTKAAMACSHQRCHGHGRCARKDPGQMEAFLHLQPDDSLGAWNSFRCHCYSGWAGPTCLEPKP.

A signal peptide spans 1-22 (MIMHLGLMMVVGLTLCLMHGQA). 5 cysteine pairs are disulfide-bonded: Cys-42-Cys-332, Cys-206-Cys-221, Cys-357-Cys-368, Cys-362-Cys-396, and Cys-398-Cys-407. A glycan (N-linked (GlcNAc...) asparagine) is linked at Asn-69. Glu-129 serves as the catalytic Proton donor. An N-linked (GlcNAc...) asparagine glycan is attached at Asn-216. The 56-residue stretch at 353 to 408 (AAMACSHQRCHGHGRCARKDPGQMEAFLHLQPDDSLGAWNSFRCHCYSGWAGPTCL) folds into the EGF-like domain.

This sequence belongs to the glycosyl hydrolase 56 family. Post-translationally, N-glycosylated. In terms of tissue distribution, expressed in testis, epididymal tissue, epididymal luminal fluid (ELF), acrosome-intact (AI) sperm and caput (CAP), corpus (COR) and caudal (CAU) sperm. Higher expression in sperm than testis (at protein level). Liver, kidney, skin, brain, stomach and testis. Expressed mainly in granulosa cells of the ovaries. Expressed in small and large antral follicles. Not present in theca or stroma cells. Expressed in testis and liver. Expressed in testis and CAP, COR, and CAU epididymis tissue.

Its subcellular location is the secreted. It localises to the cell membrane. It is found in the cytoplasmic vesicle. The protein localises to the secretory vesicle. The protein resides in the acrosome. Its subcellular location is the endoplasmic reticulum. It localises to the early endosome. It carries out the reaction Random hydrolysis of (1-&gt;4)-linkages between N-acetyl-beta-D-glucosamine and D-glucuronate residues in hyaluronate.. Its function is as follows. Facilitates sperm penetration into the layer of cumulus cells surrounding the egg by digesting hyaluronic acid. Involved in induction of the acrosome reaction in the sperm. Involved in follicular atresia, the breakdown of immature ovarian follicles that are not selected to ovulate. Induces ovarian granulosa cell apoptosis, possibly via apoptotic signaling pathway involving CASP8 and CASP3 activation, and poly(ADP-ribose) polymerase (PARP) cleavage. Has no hyaluronidase activity in embryonic fibroblasts in vitro. Has no hyaluronidase activity in granulosa cells in vitro. The chain is Hyaluronidase-3 (Hyal3) from Mus musculus (Mouse).